The chain runs to 338 residues: GTPase Obg (338 aa).

The Obg domain maps to 1–159 (MSFIDEVKIH…RWLRLELKLM (159 aa)). The OBG-type G domain maps to 160-331 (ADVGLLGMPS…LLDEIARNLW (172 aa)). GTP contacts are provided by residues 166–173 (GMPSVGKS), 191–195 (FTTLK), 213–216 (DIPG), 283–286 (NKID), and 312–314 (SAA). Mg(2+) contacts are provided by serine 173 and threonine 193.

Belongs to the TRAFAC class OBG-HflX-like GTPase superfamily. OBG GTPase family. As to quaternary structure, monomer. Requires Mg(2+) as cofactor.

Its subcellular location is the cytoplasm. Its function is as follows. An essential GTPase which binds GTP, GDP and possibly (p)ppGpp with moderate affinity, with high nucleotide exchange rates and a fairly low GTP hydrolysis rate. Plays a role in control of the cell cycle, stress response, ribosome biogenesis and in those bacteria that undergo differentiation, in morphogenesis control. The polypeptide is GTPase Obg (Geotalea uraniireducens (strain Rf4) (Geobacter uraniireducens)).